A 683-amino-acid chain; its full sequence is Elongation factor G 2 (683 aa).

A tr-type G domain is found at 4 to 279; the sequence is QQMRNIGIMA…AVVEYLPAPQ (276 aa). GTP contacts are provided by residues 13–20, 77–81, and 131–134; these read AHVDAGKT, DTPGH, and NKMD.

This sequence belongs to the TRAFAC class translation factor GTPase superfamily. Classic translation factor GTPase family. EF-G/EF-2 subfamily.

The protein resides in the cytoplasm. Its function is as follows. Catalyzes the GTP-dependent ribosomal translocation step during translation elongation. During this step, the ribosome changes from the pre-translocational (PRE) to the post-translocational (POST) state as the newly formed A-site-bound peptidyl-tRNA and P-site-bound deacylated tRNA move to the P and E sites, respectively. Catalyzes the coordinated movement of the two tRNA molecules, the mRNA and conformational changes in the ribosome. The protein is Elongation factor G 2 (fusB) of Treponema pallidum (strain Nichols).